Here is a 445-residue protein sequence, read N- to C-terminus: Response regulator protein PilR (445 aa).

The Response regulatory domain occupies 5–119; the sequence is KALIVDDEPD…RLRELVATAL (115 aa). Asp-11 and Asp-54 each carry 4-aspartylphosphate. The Sigma-54 factor interaction domain occupies 135-364; that stretch reads LLGESPPMRA…LENMLERAYT (230 aa). Residues 163 to 170 and 226 to 235 contribute to the ATP site; these read GESGSGKE and ASGGTLFLDE. Residues 418-437 constitute a DNA-binding region (H-T-H motif); the sequence is RWNRTAAAQRLGLTFRSMRY.

In terms of processing, phosphorylated by PilS.

Its subcellular location is the cytoplasm. Its function is as follows. Member of the two-component regulatory system PilS/PilR that regulates the expression of multiple genes including the type IV pilus (T4P) major subunit PilA. Thereby, plays a major role in the regulation of multiple motility pathways. Upon appropriate environmental signals, the histidine kinase PilS transfers the phosphoryl group onto PilR. In turn, PilR functions as a transcriptional activator by direct binding to a cis-acting sequence upstream of the pilin gene promoter leading to its activation. The sequence is that of Response regulator protein PilR (pilR) from Pseudomonas aeruginosa (strain ATCC 15692 / DSM 22644 / CIP 104116 / JCM 14847 / LMG 12228 / 1C / PRS 101 / PAO1).